The chain runs to 132 residues: ATP synthase epsilon chain (132 aa).

This sequence belongs to the ATPase epsilon chain family. In terms of assembly, F-type ATPases have 2 components, CF(1) - the catalytic core - and CF(0) - the membrane proton channel. CF(1) has five subunits: alpha(3), beta(3), gamma(1), delta(1), epsilon(1). CF(0) has three main subunits: a, b and c.

It is found in the cell membrane. Its function is as follows. Produces ATP from ADP in the presence of a proton gradient across the membrane. The chain is ATP synthase epsilon chain (atpC) from Bacillus sp. (strain PS3).